The following is a 142-amino-acid chain: Lysozyme 2 (142 aa).

Positions 1–20 are cleaved as a signal peptide; sequence MLKLTLTILAAVLLVTPAFG. Residues 21-142 enclose the C-type lysozyme domain; that stretch reads KVYTRCSLAR…HTLPSIDDCF (122 aa). Cystine bridges form between Cys-26-Cys-141, Cys-47-Cys-131, Cys-82-Cys-98, and Cys-94-Cys-112. The active site involves Glu-52. An N-linked (GlcNAc...) asparagine glycan is attached at Asn-66. The active site involves Asp-70.

This sequence belongs to the glycosyl hydrolase 22 family. Expressed only in the midgut where it is concentrated around the middle in all larval stages.

It localises to the secreted. It catalyses the reaction Hydrolysis of (1-&gt;4)-beta-linkages between N-acetylmuramic acid and N-acetyl-D-glucosamine residues in a peptidoglycan and between N-acetyl-D-glucosamine residues in chitodextrins.. Its function is as follows. Lysozymes have primarily a bacteriolytic function. Shows antibacterial activity against Gram-positive bacterium M.luteus but shows no activity against Gram-negative bacterium E.coli. Likely to play a role in the eradication of ingested pathogens during their passage through the intestine. This Lucilia sericata (Green bottle fly) protein is Lysozyme 2.